A 359-amino-acid chain; its full sequence is Uroporphyrinogen decarboxylase (359 aa).

Arginine 28, alanine 30, arginine 32, aspartate 79, tyrosine 157, serine 212, and histidine 335 together coordinate coproporphyrinogen III.

This sequence belongs to the uroporphyrinogen decarboxylase family. In terms of assembly, monomer.

It is found in the nucleus. Its subcellular location is the cytoplasm. It catalyses the reaction uroporphyrinogen III + 4 H(+) = coproporphyrinogen III + 4 CO2. The enzyme catalyses uroporphyrinogen I + 4 H(+) = coproporphyrinogen I + 4 CO2. Its pathway is porphyrin-containing compound metabolism; protoporphyrin-IX biosynthesis; coproporphyrinogen-III from 5-aminolevulinate: step 4/4. In terms of biological role, catalyzes the sequential decarboxylation of four acetate groups of uroporphyrinogen-III (octacarboxyporphyrin) to yield coproporphyrinogen-III (tetracarboxyporphyrin) with the formation of intermediate hepta-, hexa- and penta-carboxylate porphyrinogens in the heme biosynthesis pathway. Acts on a number of porphyrinogens, but only coproporphyrinogen III can ultimately be converted to heme. This Schizosaccharomyces pombe (strain 972 / ATCC 24843) (Fission yeast) protein is Uroporphyrinogen decarboxylase (hem12).